Consider the following 132-residue polypeptide: Small ribosomal subunit protein uS8 (132 aa).

The protein belongs to the universal ribosomal protein uS8 family. As to quaternary structure, part of the 30S ribosomal subunit. Contacts proteins S5 and S12.

One of the primary rRNA binding proteins, it binds directly to 16S rRNA central domain where it helps coordinate assembly of the platform of the 30S subunit. The chain is Small ribosomal subunit protein uS8 from Streptococcus thermophilus (strain CNRZ 1066).